We begin with the raw amino-acid sequence, 86 residues long: Cell division topological specificity factor (86 aa).

This sequence belongs to the MinE family.

In terms of biological role, prevents the cell division inhibition by proteins MinC and MinD at internal division sites while permitting inhibition at polar sites. This ensures cell division at the proper site by restricting the formation of a division septum at the midpoint of the long axis of the cell. The polypeptide is Cell division topological specificity factor (Shewanella woodyi (strain ATCC 51908 / MS32)).